The sequence spans 333 residues: GTP 3',8-cyclase (333 aa).

Positions 7-221 (KFGRVHDYIR…FEACNEAGYE (215 aa)) constitute a Radical SAM core domain. Residue arginine 16 coordinates GTP. The [4Fe-4S] cluster site is built by cysteine 23 and cysteine 27. Residue tyrosine 29 coordinates S-adenosyl-L-methionine. Cysteine 30 serves as a coordination point for [4Fe-4S] cluster. GTP is bound at residue arginine 66. Glycine 70 is a binding site for S-adenosyl-L-methionine. Residue threonine 97 participates in GTP binding. Serine 121 serves as a coordination point for S-adenosyl-L-methionine. Lysine 158 provides a ligand contact to GTP. Methionine 192 serves as a coordination point for S-adenosyl-L-methionine. Cysteine 257 and cysteine 260 together coordinate [4Fe-4S] cluster. 262–264 (RLR) is a GTP binding site. Cysteine 274 is a [4Fe-4S] cluster binding site.

Belongs to the radical SAM superfamily. MoaA family. In terms of assembly, monomer and homodimer. [4Fe-4S] cluster serves as cofactor.

The enzyme catalyses GTP + AH2 + S-adenosyl-L-methionine = (8S)-3',8-cyclo-7,8-dihydroguanosine 5'-triphosphate + 5'-deoxyadenosine + L-methionine + A + H(+). It functions in the pathway cofactor biosynthesis; molybdopterin biosynthesis. Its function is as follows. Catalyzes the cyclization of GTP to (8S)-3',8-cyclo-7,8-dihydroguanosine 5'-triphosphate. The polypeptide is GTP 3',8-cyclase (Listeria monocytogenes serovar 1/2a (strain ATCC BAA-679 / EGD-e)).